A 224-amino-acid chain; its full sequence is UPF0758 protein PSPTO_0086 (224 aa).

One can recognise an MPN domain in the interval 102–224 (ALENPAQVRN…PLSMVEKGLM (123 aa)). Positions 173, 175, and 186 each coordinate Zn(2+). The JAMM motif signature appears at 173–186 (HNHPSGITTPSRSD).

It belongs to the UPF0758 family.

The sequence is that of UPF0758 protein PSPTO_0086 from Pseudomonas syringae pv. tomato (strain ATCC BAA-871 / DC3000).